The primary structure comprises 317 residues: Melanocyte-stimulating hormone receptor (317 aa).

Over 1–37 (MPMQGAQRRLLGSLNSTPTATPNLGLAANHTGAPCLE) the chain is Extracellular. Residue Asn29 is glycosylated (N-linked (GlcNAc...) asparagine). A helical transmembrane segment spans residues 38–63 (VSIPDGLFLSLGLVSLVENVLVVAAI). Over 64 to 72 (AKNRNLHSP) the chain is Cytoplasmic. The chain crosses the membrane as a helical span at residues 73-93 (MYCFICCLALSDLLVSGSNML). Topologically, residues 94–118 (ETAVILLLEAGALATRASVVQQLQN) are extracellular. A helical transmembrane segment spans residues 119–140 (TIDVLTCSSMLCSLCFLGAIAV). Topologically, residues 141–163 (DRYVSIFYALRYHSIVTLPRARR) are cytoplasmic. Residues 164-183 (AIAAIWVASVLSSTLFIAYC) traverse the membrane as a helical segment. Over 184 to 191 (DHAAVLLC) the chain is Extracellular. The helical transmembrane segment at 192–211 (LVVFFLAMLVLMAVLYVHML) threads the bilayer. Topologically, residues 212-240 (ARACQHAQGITRLHKRQLPAHQGFGLRGA) are cytoplasmic. Residues 241–266 (ATLTILLGIFFLCWGPFFLHLMLVVL) traverse the membrane as a helical segment. Topologically, residues 267–279 (CPQHLTCSCIFKN) are extracellular. A helical transmembrane segment spans residues 280–300 (FKVFLTLIICNTIIDPLIYAF). Residues 301–317 (RSQELCRTLKEVLLCSW) are Cytoplasmic-facing. Cys315 is lipidated: S-palmitoyl cysteine.

This sequence belongs to the G-protein coupled receptor 1 family. Interacts with MGRN1, but does not undergo MGRN1-mediated ubiquitination; this interaction competes with GNAS-binding and thus inhibits agonist-induced cAMP production. Interacts with OPN3; the interaction results in a decrease in MC1R-mediated cAMP signaling and ultimately a decrease in melanin production in melanocytes.

It localises to the cell membrane. Functionally, receptor for MSH (alpha, beta and gamma) and ACTH. The activity of this receptor is mediated by G proteins which activate adenylate cyclase. Mediates melanogenesis, the production of eumelanin (black/brown) and phaeomelanin (red/yellow), via regulation of cAMP signaling in melanocytes. In Alouatta palliata (Mantled howler monkey), this protein is Melanocyte-stimulating hormone receptor (MC1R).